A 479-amino-acid chain; its full sequence is 6-phosphogluconate dehydrogenase, decarboxylating (479 aa).

NADP(+) contacts are provided by residues 10-15, 33-35, 75-77, and asparagine 103; these read GLAVMG, NRS, and IKA. Substrate contacts are provided by residues asparagine 103 and 129–131; that span reads SGG. The active-site Proton acceptor is lysine 183. 186–187 is a substrate binding site; the sequence is HN. Glutamate 190 acts as the Proton donor in catalysis. Substrate-binding residues include tyrosine 191, lysine 260, arginine 287, arginine 447, and histidine 453.

The protein belongs to the 6-phosphogluconate dehydrogenase family. As to quaternary structure, homodimer.

It carries out the reaction 6-phospho-D-gluconate + NADP(+) = D-ribulose 5-phosphate + CO2 + NADPH. It functions in the pathway carbohydrate degradation; pentose phosphate pathway; D-ribulose 5-phosphate from D-glucose 6-phosphate (oxidative stage): step 3/3. In terms of biological role, catalyzes the oxidative decarboxylation of 6-phosphogluconate to ribulose 5-phosphate and CO(2), with concomitant reduction of NADP to NADPH. In Chlamydia muridarum (strain MoPn / Nigg), this protein is 6-phosphogluconate dehydrogenase, decarboxylating (gnd).